A 448-amino-acid chain; its full sequence is UPF0210 protein Pisl_0759 (448 aa).

Belongs to the UPF0210 family.

The sequence is that of UPF0210 protein Pisl_0759 from Pyrobaculum islandicum (strain DSM 4184 / JCM 9189 / GEO3).